A 981-amino-acid chain; its full sequence is Anoctamin-3 (981 aa).

Residues 1-28 (MVHHSGSIQSFKQQKGMNISKSEITTEA) are compositionally biased toward polar residues. Disordered stretches follow at residues 1 to 32 (MVHH…SLKP) and 67 to 87 (PTSV…EESR). At 1 to 403 (MVHHSGSIQS…LYFAWLGWYT (403 aa)) the chain is on the cytoplasmic side. The span at 76 to 87 (DKPEHVTSEESR) shows a compositional bias: basic and acidic residues. Residues 404-424 (GMLIPAAVVGLCVFFYGLVTM) form a helical membrane-spanning segment. Residues N425, N448, and N455 are each glycosylated (N-linked (GlcNAc...) asparagine). Residues 425 to 469 (NESQVSQEICKATEVFMCPLCDKNCSLQRLNDSCIYAKVTYLFDN) are Extracellular-facing. The chain crosses the membrane as a helical span at residues 470–490 (GGTVFFAIFMAIWATVFLEFW). Topologically, residues 491–550 (KRRRSILTYTWDLIEWEEEEETLRPQFEAKYYRMEVINPITGKPEPHQPSSDKVTRLLVS) are cytoplasmic. The helical transmembrane segment at 551–571 (VSGIFFMISLVITAVFAVVVY) threads the bilayer. At 572–592 (RLVVMEQFASFKWNFVKQHWQ) the chain is on the extracellular side. A helical membrane pass occupies residues 593–613 (FATSGAAVCINFIIIMLLNLA). The Cytoplasmic portion of the chain corresponds to 614-640 (YEKIAYLLTNLEYPRTESEWENSFALK). Residues 641 to 661 (MFLFQFVNLNSSIFYIAFFLG) traverse the membrane as a helical segment. At 662–761 (RFVGHPGKYN…MDEYLEMVLQ (100 aa)) the chain is on the extracellular side. A helical transmembrane segment spans residues 762-782 (FGFTTIFVAAFPLAPLLALLN). Residues 783–810 (NIIEIRLDAYKFVTQWRRPLPARATDIG) are Cytoplasmic-facing. The helical transmembrane segment at 811-831 (IWLGILEGIGILAVITNAFVI) threads the bilayer. The Extracellular segment spans residues 832–914 (AITSDYIPRF…QYWHILAARL (83 aa)). N866 carries N-linked (GlcNAc...) asparagine glycosylation. Residues 915-935 (AFIIVFEHLVFGIKSFIAYLI) traverse the membrane as a helical segment. Over 936 to 981 (PDIPKGLRERIRREKYLVQEMMYEAELEHLQQQRRKSGQPIHHEWP) the chain is Cytoplasmic.

It belongs to the anoctamin family. In terms of assembly, interacts with KCNT1/Slack. Predominantly expressed in neuronal tissues. Expressed in brain.

Its subcellular location is the cell membrane. It catalyses the reaction a 1,2-diacyl-sn-glycero-3-phosphocholine(in) = a 1,2-diacyl-sn-glycero-3-phosphocholine(out). It carries out the reaction a beta-D-galactosyl-(1&lt;-&gt;1')-N-acylsphing-4-enine(out) = a beta-D-galactosyl-(1&lt;-&gt;1')-N-acylsphing-4-enine(in). In terms of biological role, has calcium-dependent phospholipid scramblase activity; scrambles phosphatidylcholine and galactosylceramide. Does not exhibit calcium-activated chloride channel (CaCC) activity. Seems to act as potassium channel regulator and may inhibit pain signaling; can facilitate KCNT1/Slack channel activity by promoting its full single-channel conductance at very low sodium concentrations and by increasing its sodium sensitivity. The chain is Anoctamin-3 from Mus musculus (Mouse).